Consider the following 122-residue polypeptide: Urease subunit beta (122 aa).

Belongs to the urease beta subunit family. As to quaternary structure, heterotrimer of UreA (gamma), UreB (beta) and UreC (alpha) subunits. Three heterotrimers associate to form the active enzyme.

Its subcellular location is the cytoplasm. It catalyses the reaction urea + 2 H2O + H(+) = hydrogencarbonate + 2 NH4(+). It participates in nitrogen metabolism; urea degradation; CO(2) and NH(3) from urea (urease route): step 1/1. The protein is Urease subunit beta of Acetivibrio thermocellus (strain ATCC 27405 / DSM 1237 / JCM 9322 / NBRC 103400 / NCIMB 10682 / NRRL B-4536 / VPI 7372) (Clostridium thermocellum).